Here is a 287-residue protein sequence, read N- to C-terminus: MEIKQIMVAGAGQMGSGIAQTAADAGFYVRMYDVNPEAAEAGLKRLKKQLARDAEKGKRTETEVKSVINRISISQTLEEAEHADIVIEAIAENMAAKTEMFKTLDRICPPHTILASNTSSLPITEIAAVTNRPQRVIGMHFMNPVPVMKLVEVIRGLATSEETALDVMALAEKMGKTAVEVNDFPGFVSNRVLLPMINEAIYCVYEGVAKPEAIDEVMKLGMNHPMGPLALADFIGLDTCLSIMEVLHSGLGDSKYRPCPLLRKYVKAGWLGKKSGRGFYDYEEKTS.

This sequence belongs to the 3-hydroxyacyl-CoA dehydrogenase family.

The enzyme catalyses (3S)-3-hydroxybutanoyl-CoA + NADP(+) = acetoacetyl-CoA + NADPH + H(+). It participates in lipid metabolism; butanoate metabolism. The protein is Probable 3-hydroxybutyryl-CoA dehydrogenase (mmgB) of Bacillus subtilis (strain 168).